The primary structure comprises 562 residues: Formate--tetrahydrofolate ligase (562 aa).

71 to 78 (TPAGEGKS) serves as a coordination point for ATP.

The protein belongs to the formate--tetrahydrofolate ligase family.

The catalysed reaction is (6S)-5,6,7,8-tetrahydrofolate + formate + ATP = (6R)-10-formyltetrahydrofolate + ADP + phosphate. The protein operates within one-carbon metabolism; tetrahydrofolate interconversion. This chain is Formate--tetrahydrofolate ligase, found in Bacillus cereus (strain Q1).